Here is a 149-residue protein sequence, read N- to C-terminus: Ribonuclease H (149 aa).

The RNase H type-1 domain occupies 1 to 141; the sequence is MKTVTLFSDG…CDTMAREKAT (141 aa). Mg(2+) is bound by residues Asp-9, Glu-47, Asp-69, and Asp-133.

It belongs to the RNase H family. Monomer. Requires Mg(2+) as cofactor.

It localises to the cytoplasm. The catalysed reaction is Endonucleolytic cleavage to 5'-phosphomonoester.. Its function is as follows. Endonuclease that specifically degrades the RNA of RNA-DNA hybrids. This is Ribonuclease H from Campylobacter curvus (strain 525.92).